A 510-amino-acid chain; its full sequence is Anaerobic nitric oxide reductase transcription regulator NorR (510 aa).

One can recognise a Sigma-54 factor interaction domain in the interval 188–417 (IIGNSQGMRT…LEHVIKRAAV (230 aa)). Residues 216–223 (GETGVGKE) and 279–288 (ADGGTLFLDE) each bind ATP. A DNA-binding region (H-T-H motif) is located at residues 486–505 (WAATARQLELDSGNLHRLAK).

It participates in nitrogen metabolism; nitric oxide reduction. In terms of biological role, required for the expression of anaerobic nitric oxide (NO) reductase, acts as a transcriptional activator for at least the norVW operon. Activation also requires sigma-54. This chain is Anaerobic nitric oxide reductase transcription regulator NorR, found in Vibrio vulnificus (strain YJ016).